The sequence spans 208 residues: Thymidylate kinase (208 aa).

10-17 (GPDGSGKT) contributes to the ATP binding site.

Belongs to the thymidylate kinase family.

The enzyme catalyses dTMP + ATP = dTDP + ADP. Functionally, phosphorylation of dTMP to form dTDP in both de novo and salvage pathways of dTTP synthesis. The chain is Thymidylate kinase from Listeria monocytogenes serotype 4b (strain CLIP80459).